A 184-amino-acid polypeptide reads, in one-letter code: Inner membrane-spanning protein YciB (184 aa).

A run of 5 helical transmembrane segments spans residues 19–39 (LVGIREAAITLIIATLIQLLI), 52–72 (LFMGIAVVFFGTLTAYFNQLE), 76–96 (WKVTIVYAIFALVLLVSQYGF), 123–143 (LGWALFFLLCMLINLYISQYL), and 151–171 (FKTFGILGMTLIATIITGIYI).

Belongs to the YciB family.

Its subcellular location is the cell inner membrane. Functionally, plays a role in cell envelope biogenesis, maintenance of cell envelope integrity and membrane homeostasis. The protein is Inner membrane-spanning protein YciB of Pasteurella multocida (strain Pm70).